Here is a 107-residue protein sequence, read N- to C-terminus: Large ribosomal subunit protein uL24 (107 aa).

The protein belongs to the universal ribosomal protein uL24 family. Part of the 50S ribosomal subunit.

Its function is as follows. One of two assembly initiator proteins, it binds directly to the 5'-end of the 23S rRNA, where it nucleates assembly of the 50S subunit. In terms of biological role, one of the proteins that surrounds the polypeptide exit tunnel on the outside of the subunit. The protein is Large ribosomal subunit protein uL24 of Mesomycoplasma hyopneumoniae (strain J / ATCC 25934 / NCTC 10110) (Mycoplasma hyopneumoniae).